Consider the following 256-residue polypeptide: Isoprenyl transferase 1 (256 aa).

Asp34 is an active-site residue. Residue Asp34 participates in Mg(2+) binding. Substrate-binding positions include 35–38, Trp39, His52, and 80–82; these read GNRR and STE. Asn83 acts as the Proton acceptor in catalysis. Substrate-binding positions include Arg86, Arg205, and 211 to 213; that span reads RLS. Glu224 is a Mg(2+) binding site.

This sequence belongs to the UPP synthase family. Homodimer. The cofactor is Mg(2+).

Functionally, catalyzes the condensation of isopentenyl diphosphate (IPP) with allylic pyrophosphates generating different type of terpenoids. The sequence is that of Isoprenyl transferase 1 from Corynebacterium efficiens (strain DSM 44549 / YS-314 / AJ 12310 / JCM 11189 / NBRC 100395).